A 469-amino-acid polypeptide reads, in one-letter code: Argininosuccinate lyase (469 aa).

This sequence belongs to the lyase 1 family. Argininosuccinate lyase subfamily.

The protein localises to the cytoplasm. The enzyme catalyses 2-(N(omega)-L-arginino)succinate = fumarate + L-arginine. It participates in amino-acid biosynthesis; L-arginine biosynthesis; L-arginine from L-ornithine and carbamoyl phosphate: step 3/3. The sequence is that of Argininosuccinate lyase from Paracoccus denitrificans (strain Pd 1222).